A 391-amino-acid chain; its full sequence is MLDEESSIQRRDVLSALGAAGVTTLAGCTGGDTGDTDDTEASETTASEGTTSGTTTGDVETTDGGGPSEGETVNAAWVYISEIGDLGWSWAHDQARQAVDEQYDWLETEYTEAVAPSDSERVFEQYAQGDVDVIFGTTFGYQDPMYAVAEDYPDTVFEHATGYRTRENMGRYMGRIYEPRYLAGQATGMVTENNTIGYVAAFPIPEVVRSINAMALGARSVNPEATFKVRWVNAWFDPPTAREAANALIDEGCDVIAQEQDSPAAVRAASDAGVWTSGYNAPMGQFGGENYLISPIWDWTEFYGPTLESLHEGSWEADAFWGGMETGVPMLDEWGPNVSQEVKDQVAATEEQILNDELDVWAGSAFEGESDEFLFQEMSSFVEGVEGEVPS.

Residues 1–28 form the signal peptide; the sequence is MLDEESSIQRRDVLSALGAAGVTTLAGC. A disordered region spans residues 24–71; the sequence is TLAGCTGGDTGDTDDTEASETTASEGTTSGTTTGDVETTDGGGPSEGE. Low complexity predominate over residues 42 to 59; sequence SETTASEGTTSGTTTGDV.

It belongs to the BMP lipoprotein family. The complex is composed of two ATP-binding proteins (TsgD13), two transmembrane proteins (TsgB13 and TsgC13) and a solute-binding protein (TsgA13).

Part of an ABC transporter complex involved in glucose import. This chain is Putative ABC transporter glucose-binding protein TsgA13 (tsgA13), found in Haloferax volcanii (strain ATCC 29605 / DSM 3757 / JCM 8879 / NBRC 14742 / NCIMB 2012 / VKM B-1768 / DS2) (Halobacterium volcanii).